A 131-amino-acid polypeptide reads, in one-letter code: Mediator of RNA polymerase II transcription subunit 31 (131 aa).

Ala-2 carries the post-translational modification N-acetylalanine.

The protein belongs to the Mediator complex subunit 31 family. Component of the Mediator complex, which is composed of MED1, MED4, MED6, MED7, MED8, MED9, MED10, MED11, MED12, MED13, MED13L, MED14, MED15, MED16, MED17, MED18, MED19, MED20, MED21, MED22, MED23, MED24, MED25, MED26, MED27, MED29, MED30, MED31, CCNC, CDK8 and CDC2L6/CDK11. The MED12, MED13, CCNC and CDK8 subunits form a distinct module termed the CDK8 module. Mediator containing the CDK8 module is less active than Mediator lacking this module in supporting transcriptional activation. Individual preparations of the Mediator complex lacking one or more distinct subunits have been variously termed ARC, CRSP, DRIP, PC2, SMCC and TRAP.

Its subcellular location is the nucleus. Functionally, component of the Mediator complex, a coactivator involved in the regulated transcription of nearly all RNA polymerase II-dependent genes. Mediator functions as a bridge to convey information from gene-specific regulatory proteins to the basal RNA polymerase II transcription machinery. Mediator is recruited to promoters by direct interactions with regulatory proteins and serves as a scaffold for the assembly of a functional preinitiation complex with RNA polymerase II and the general transcription factors. This chain is Mediator of RNA polymerase II transcription subunit 31 (MED31), found in Bos taurus (Bovine).